Here is an 868-residue protein sequence, read N- to C-terminus: Translation initiation factor IF-2 (868 aa).

Disordered stretches follow at residues 158 to 178 (VKEE…DELT) and 200 to 269 (KKEE…KYRE). The segment covering 200–209 (KKEEVKPEKV) has biased composition (basic and acidic residues). Positions 249–260 (RGGRSKFKKKKG) are enriched in basic residues. The region spanning 368 to 537 (GRAPVVTIMG…LLQSEVLELK (170 aa)) is the tr-type G domain. A G1 region spans residues 377–384 (GHVDHGKT). GTP is bound at residue 377–384 (GHVDHGKT). The segment at 402–406 (GITQH) is G2. Positions 423–426 (DTPG) are G3. GTP-binding positions include 423 to 427 (DTPGH) and 477 to 480 (NKMD). Residues 477–480 (NKMD) are G4. The tract at residues 513–515 (SAK) is G5.

Belongs to the TRAFAC class translation factor GTPase superfamily. Classic translation factor GTPase family. IF-2 subfamily.

It localises to the cytoplasm. In terms of biological role, one of the essential components for the initiation of protein synthesis. Protects formylmethionyl-tRNA from spontaneous hydrolysis and promotes its binding to the 30S ribosomal subunits. Also involved in the hydrolysis of GTP during the formation of the 70S ribosomal complex. The protein is Translation initiation factor IF-2 of Legionella pneumophila (strain Lens).